The sequence spans 413 residues: Serine/threonine transporter SstT (413 aa).

10 helical membrane-spanning segments follow: residues 18–38 (LSLV…ALFA), 52–72 (FVSA…MASI), 86–106 (ILFL…IASM), 119–139 (IAVS…LSVV), 145–165 (ALMN…GVAI), 196–216 (LGIF…ALIG), 221–241 (LAVL…LIVF), 292–312 (VSIP…ITVL), 320–340 (LGIA…AICA), and 360–380 (LFGI…IIGV).

This sequence belongs to the dicarboxylate/amino acid:cation symporter (DAACS) (TC 2.A.23) family.

The protein localises to the cell inner membrane. The catalysed reaction is L-serine(in) + Na(+)(in) = L-serine(out) + Na(+)(out). It carries out the reaction L-threonine(in) + Na(+)(in) = L-threonine(out) + Na(+)(out). In terms of biological role, involved in the import of serine and threonine into the cell, with the concomitant import of sodium (symport system). The chain is Serine/threonine transporter SstT from Pseudomonas fluorescens (strain Pf0-1).